The following is a 359-amino-acid chain: DNA-directed RNA polymerase RPB3-11 homolog (359 aa).

The protein in the N-terminal section; belongs to the archaeal RpoD/eukaryotic RPB3 RNA polymerase subunit family. In the C-terminal section; belongs to the archaeal RpoL/eukaryotic RPB11/RPC19 RNA polymerase subunit family. In terms of assembly, part of the viral DNA-directed RNA polymerase that consists of 8 polII-like subunits (RPB1, RPB2, RPB3, RPB5, RPB6, RPB7, RPB9, RPB10), a capping enzyme and a termination factor.

The protein localises to the host cytoplasm. It localises to the virion. In terms of biological role, component of the DNA-directed RNA polymerase (RNAP) that catalyzes the transcription in the cytoplasm of viral DNA into RNA using the four ribonucleoside triphosphates as substrates. This is DNA-directed RNA polymerase RPB3-11 homolog from Ornithodoros (relapsing fever ticks).